Consider the following 749-residue polypeptide: Disintegrin and metalloproteinase domain-containing protein 10 (749 aa).

An N-terminal signal peptide occupies residues 1 to 19 (MVLPTVLILLLSWAAGLGG). Residues 20 to 214 (QYGNPLNKYI…SGPELLRKKR (195 aa)) constitute a propeptide that is removed on maturation. The Extracellular portion of the chain corresponds to 20–673 (QYGNPLNKYI…SPQLYENIAE (654 aa)). Residues 171 to 178 (GGCADHSV) carry the Cysteine switch motif. C173 lines the Zn(2+) pocket. A Peptidase M12B domain is found at 221 to 457 (NTCQLYIQTD…KRNNCFVESG (237 aa)). Cystine bridges form between C223–C314, C345–C452, C400–C436, C461–C496, C472–C485, C474–C480, C484–C516, C504–C512, C511–C537, C525–C544, C531–C563, C556–C568, C573–C599, C581–C608, C583–C598, C595–C640, and C633–C646. 2 N-linked (GlcNAc...) asparagine glycosylation sites follow: N268 and N279. Residue H384 coordinates Zn(2+). E385 is a catalytic residue. Zn(2+) contacts are provided by H388 and H394. Residue N440 is glycosylated (N-linked (GlcNAc...) asparagine). The Disintegrin domain maps to 458–552 (QPICGNGMVE…LCPASDPKPN (95 aa)). N552 carries N-linked (GlcNAc...) asparagine glycosylation. The chain crosses the membrane as a helical span at residues 674–694 (WIVAHWWAVLLMGIALIMLMA). Residues 695 to 749 (GFIKICSVHTPSSNPKLPPPKPLPGTLKRRRPPQPIQQPPRQRPRESYQMGHMRR) are Cytoplasmic-facing. A disordered region spans residues 705–749 (PSSNPKLPPPKPLPGTLKRRRPPQPIQQPPRQRPRESYQMGHMRR). The short motif at 709-716 (PKLPPPKP) is the SH3-binding element. A Phosphothreonine modification is found at T720. The SH3-binding motif lies at 723-729 (RRRPPQP). The interaction with AP2A1, AP2A2 and AP2M1 stretch occupies residues 735–749 (RQRPRESYQMGHMRR).

As to quaternary structure, forms a ternary EFNA5-EPHA3-ADAM10 complex mediating EFNA5 extracellular domain shedding by ADAM10 which regulates the EFNA5-EPHA3 complex internalization and function, the cleavage occurs in trans, with ADAM10 and its substrate being on the membranes of opposing cells. Interacts with the clathrin adapter AP2 complex subunits AP2A1, AP2A2, AP2B1, and AP2M1; this interaction facilitates ADAM10 endocytosis from the plasma membrane during long-term potentiation in hippocampal neurons. Forms a ternary complex composed of ADAM10, EPHA4 and CADH1; within the complex, ADAM10 cleaves CADH1 which disrupts adherens junctions. Interacts with EPHA2. Interacts with NGF in a divalent cation-dependent manner. Interacts with TSPAN14; the interaction promotes ADAM10 maturation and cell surface expression. Interacts with TSPAN5, TSPAN10, TSPAN14, TSPAN15, TSPAN17 and TSPAN33; these interactions regulate ADAM10 substrate specificity, endocytosis and turnover. Interacts (via extracellular domain) with TSPAN33 (via extracellular domain) and (via cytoplasmic domain) with AFDN; interaction with TSPAN33 allows the docking of ADAM10 to zonula adherens through a PDZ11-dependent interaction between TSPAN33 and PLEKHA7 while interaction with AFDN locks ADAM10 at zonula adherens. Interacts with DLG1; this interaction recruits ADAM10 to the cell membrane during long-term depression in hippocampal neurons. Interacts (via extracellular domain) with BACE1 (via extracellular domain). Interacts with FAM171A1. It depends on Zn(2+) as a cofactor. Post-translationally, the precursor is cleaved by furin and PCSK7. In terms of tissue distribution, expressed in the brain, specifically in neurons and astrocytes (at protein level). Expressed in inner and outer pillar cells of the organ of Corti (at protein level). Expressed in kidney and lung.

It is found in the cell membrane. The protein localises to the golgi apparatus membrane. It localises to the cytoplasmic vesicle. The protein resides in the clathrin-coated vesicle. Its subcellular location is the cell projection. It is found in the axon. The protein localises to the dendrite. It localises to the cell junction. The protein resides in the adherens junction. Its subcellular location is the cytoplasm. It carries out the reaction Endopeptidase of broad specificity.. Its activity is regulated as follows. Catalytically inactive when the propeptide is intact and associated with the mature enzyme. The disintegrin and cysteine-rich regions modulate access of substrates to exerts an inhibitory effect on the cleavage of ADAM10 substrates. Transmembrane metalloprotease which mediates the ectodomain shedding of a myriad of transmembrane proteins, including adhesion proteins, growth factor precursors and cytokines being essential for development and tissue homeostasis. Associates with six members of the tetraspanin superfamily TspanC8 which regulate its exit from the endoplasmic reticulum and its substrate selectivity. Cleaves the membrane-bound precursor of TNF-alpha to its mature soluble form. Responsible for the proteolytical release of soluble JAM3 from endothelial cells surface. Responsible for the proteolytic release of several other cell-surface proteins, including heparin-binding epidermal growth-like factor, ephrin-A2, CD44, CDH2 and for constitutive and regulated alpha-secretase cleavage of amyloid precursor protein (APP) at '687-Lys-|-Leu-688'. Contributes to the normal cleavage of the cellular prion protein. Involved in the cleavage of the adhesion molecule L1 at the cell surface and in released membrane vesicles, suggesting a vesicle-based protease activity. Also controls the proteolytic processing of Notch and mediates lateral inhibition during neurogenesis. Required for the development of type 1 transitional B cells into marginal zone B cells, probably by cleaving Notch. Responsible for the FasL ectodomain shedding and for the generation of the remnant ADAM10-processed FasL (FasL APL) transmembrane form. Also cleaves the ectodomain of the integral membrane proteins CORIN and ITM2B. Mediates the proteolytic cleavage of LAG3, leading to release the secreted form of LAG3. Mediates the proteolytic cleavage of IL6R and IL11RA, leading to the release of secreted forms of IL6R and IL11RA. Enhances the cleavage of CHL1 by BACE1. Cleaves NRCAM. Cleaves TREM2, resulting in shedding of the TREM2 ectodomain. Involved in the development and maturation of glomerular and coronary vasculature. During development of the cochlear organ of Corti, promotes pillar cell separation by forming a ternary complex with CADH1 and EPHA4 and cleaving CADH1 at adherens junctions. May regulate the EFNA5-EPHA3 signaling. The chain is Disintegrin and metalloproteinase domain-containing protein 10 (Adam10) from Mus musculus (Mouse).